A 358-amino-acid chain; its full sequence is Alanine racemase (358 aa).

Catalysis depends on Lys-34, which acts as the Proton acceptor; specific for D-alanine. Lys-34 bears the N6-(pyridoxal phosphate)lysine mark. Arg-130 is a binding site for substrate. Tyr-254 acts as the Proton acceptor; specific for L-alanine in catalysis. Met-302 lines the substrate pocket.

It belongs to the alanine racemase family. It depends on pyridoxal 5'-phosphate as a cofactor.

The catalysed reaction is L-alanine = D-alanine. It functions in the pathway amino-acid biosynthesis; D-alanine biosynthesis; D-alanine from L-alanine: step 1/1. In terms of biological role, catalyzes the interconversion of L-alanine and D-alanine. May also act on other amino acids. This chain is Alanine racemase (alr), found in Stutzerimonas stutzeri (strain A1501) (Pseudomonas stutzeri).